Consider the following 417-residue polypeptide: MFSRDLTLARFDADLFAAMQQEAKRQEDHIELIASENYTSPAVMEAQGSVLTNKYAEGYPGKRYYGGCEYVDVVEQLAIDRAKELFGADYANVQPHAGSQANAAVYLALLSAGDTILGMSLAHGGHLTHGASVSSSGKLYNAVQYGINDQGLIDYDEVERLAVEHKPKMIVAGFSAYSQKLDFARFREIADKVGAYLFVDMAHVAGLVAAGVYPNPVPFADVVTTTTHKTLRGPRGGLILAKKNEEIEKKLNSAVFPGAQGGPLEHVIAAKAVCFKEALQPEFKAYQQQVVKNAQAMAEVFIQRGFDVVSGGTQNHLFLLSLIKQDITGKDADAALGRAHITVNKNSVPNDPRSPFVTSGLRIGTPAVTTRGFGEAECRELAGWICDILDNMGDESVIDAVRGKVEAVCAKFPVYGN.

(6S)-5,6,7,8-tetrahydrofolate contacts are provided by residues Leu121 and 125–127 (GHL). Lys229 carries the N6-(pyridoxal phosphate)lysine modification. 354–356 (SPF) contributes to the (6S)-5,6,7,8-tetrahydrofolate binding site.

This sequence belongs to the SHMT family. In terms of assembly, homodimer. The cofactor is pyridoxal 5'-phosphate.

Its subcellular location is the cytoplasm. The catalysed reaction is (6R)-5,10-methylene-5,6,7,8-tetrahydrofolate + glycine + H2O = (6S)-5,6,7,8-tetrahydrofolate + L-serine. It functions in the pathway one-carbon metabolism; tetrahydrofolate interconversion. The protein operates within amino-acid biosynthesis; glycine biosynthesis; glycine from L-serine: step 1/1. Its function is as follows. Catalyzes the reversible interconversion of serine and glycine with tetrahydrofolate (THF) serving as the one-carbon carrier. This reaction serves as the major source of one-carbon groups required for the biosynthesis of purines, thymidylate, methionine, and other important biomolecules. Also exhibits THF-independent aldolase activity toward beta-hydroxyamino acids, producing glycine and aldehydes, via a retro-aldol mechanism. The chain is Serine hydroxymethyltransferase from Stutzerimonas stutzeri (strain A1501) (Pseudomonas stutzeri).